The chain runs to 1338 residues: MVSYWDTGVLLCALLSCLLLTGSSSGSKLKDPELSLKGTQHIMQAGQTLHLQCRGEAAHKWSLPEMVSKESERLSITKSACGRNGKQFCSTLTLNTAQANHTGFYSCKYLAVPTSKKKETESAIYIFISDTGRPFVEMYSEIPEIIHMTEGRELVIPCRVTSPNITVTLKKFPLDTLIPDGKRIIWDSRKGFIISNATYKEIGLLTCEATVNGHLYKTNYLTHRQTNTIIDVQISTPRPVKLLRGHTLVLNCTATTPLNTRVQMTWSYPDEKNKRASVRRRIDQSNSHANIFYSVLTIDKMQNKDKGLYTCRVRSGPSFKSVNTSVHIYDKAFITVKHRKQQVLETVAGKRSYRLSMKVKAFPSPEVVWLKDGLPATEKSARYLTRGYSLIIKDVTEEDAGNYTILLSIKQSNVFKNLTATLIVNVKPQIYEKAVSSFPDPALYPLGSRQILTCTAYGIPQPTIKWFWHPCNHNHSEARCDFCSNNEESFILDADSNMGNRIESITQRMAIIEGKNKMASTLVVADSRISGIYICIASNKVGTVGRNISFYITDVPNGFHVNLEKMPTEGEDLKLSCTVNKFLYRDVTWILLRTVNNRTMHYSISKQKMAITKEHSITLNLTIMNVSLQDSGTYACRARNVYTGEEILQKKEITIRDQEAPYLLRNLSDHTVAISSSTTLDCHANGVPEPQITWFKNNHKIQQEPGIILGPGSSTLFIERVTEEDEGVYHCKATNQKGSVESSAYLTVQGTSDKSNLELITLTCTCVAATLFWLLLTLFIRKMKRSSSEIKTDYLSIIMDPDEVPLDEQCERLPYDASKWEFARERLKLGKSLGRGAFGKVVQASAFGIKKSPTCRTVAVKMLKEGATASEYKALMTELKILTHIGHHLNVVNLLGACTKQGGPLMVIVEYCKYGNLSNYLKSKRDLFFLNKDAALHMEPKKEKMEPGLEQGKKPRLDSVTSSESFASSGFQEDKSLSDVEEEEDSDGFYKEPITMEDLISYSFQVARGMEFLSSRKCIHRDLAARNILLSENNVVKICDFGLARDIYKNPDYVRKGDTRLPLKWMAPESIFDKIYSTKSDVWSYGVLLWEIFSLGGSPYPGVQMDEDFCSRLREGMRMRAPEYSTPEIYQIMLDCWHRDPKERPRFAELVEKLGDLLQANVQQDGKDYIPINAILTGNSGFTYSTPAFSEDFFKESISAPKFNSGSSDDVRYVNAFKFMSLERIKTFEELLPNATSMFDDYQGDSSTLLASPMLKRFTWTDSKPKASLKIDLRVTSKSKESGLSDVSRPSFCHSSCGHVSEGKRRFTYDHAELERKIACCSPPPDYNSVVLYSTPPI.

Residues 1–26 (MVSYWDTGVLLCALLSCLLLTGSSSG) form the signal peptide. The Extracellular segment spans residues 27-758 (SKLKDPELSL…QGTSDKSNLE (732 aa)). 7 consecutive Ig-like C2-type domains span residues 32–123 (PELS…TESA), 151–214 (GREL…VNGH), 230–327 (IDVQ…TSVH), 335–421 (TVKH…LTAT), 428–553 (PQIY…FYIT), 556–654 (PNGF…KEIT), and 661–747 (PYLL…AYLT). Cystine bridges form between Cys-53–Cys-107 and Cys-158–Cys-207. Asn-100, Asn-164, Asn-196, and Asn-251 each carry an N-linked (GlcNAc...) asparagine glycan. Cys-252 and Cys-311 form a disulfide bridge. N-linked (GlcNAc...) asparagine glycosylation is found at Asn-323, Asn-402, Asn-417, Asn-474, Asn-547, Asn-597, Asn-620, Asn-625, and Asn-666. An intrachain disulfide couples Cys-454 to Cys-535. An intrachain disulfide couples Cys-577 to Cys-636. Cysteines 682 and 731 form a disulfide. Residues 759–780 (LITLTCTCVAATLFWLLLTLFI) traverse the membrane as a helical segment. The Cytoplasmic portion of the chain corresponds to 781–1338 (RKMKRSSSEI…SVVLYSTPPI (558 aa)). The Protein kinase domain occupies 827-1158 (LKLGKSLGRG…ELVEKLGDLL (332 aa)). ATP-binding positions include 833-841 (LGRGAFGKV) and Lys-861. Position 914 is a phosphotyrosine; by autocatalysis (Tyr-914). A compositionally biased stretch (basic and acidic residues) spans 940-957 (PKKEKMEPGLEQGKKPRL). Residues 940–982 (PKKEKMEPGLEQGKKPRLDSVTSSESFASSGFQEDKSLSDVEE) are disordered. The segment covering 959 to 971 (SVTSSESFASSGF) has biased composition (polar residues). Asp-1022 (proton acceptor) is an active-site residue. 7 positions are modified to phosphotyrosine; by autocatalysis: Tyr-1053, Tyr-1169, Tyr-1213, Tyr-1242, Tyr-1309, Tyr-1327, and Tyr-1333.

This sequence belongs to the protein kinase superfamily. Tyr protein kinase family. CSF-1/PDGF receptor subfamily. Interacts with VEGFA, VEGFB and PGF. Monomer in the absence of bound VEGFA, VEGFB or PGF. Homodimer in the presence of bound VEGFA, VEGFB and PGF. Can also form a heterodimer with KDR. Interacts (when tyrosine phosphorylated) with CBL, CRK, GRB2, NCK1, PIK3R1, PLCG, PSEN1 and PTPN11. Probably also interacts with PTPRB. Interacts with RACK1. Identified in a complex with CBL and CD2AP. N-glycosylated. In terms of processing, ubiquitinated after VEGFA-mediated autophosphorylation, leading to proteolytic degradation. Post-translationally, autophosphorylated on tyrosine residues upon ligand binding. Autophosphorylation occurs in trans, i.e. one subunit of the dimeric receptor phosphorylates tyrosine residues on the other subunit. Phosphorylation at Tyr-1169 is important for interaction with PLCG. Phosphorylation at Tyr-1213 is important for interaction with PIK3R1, PTPN11, GRB2, and PLCG. Phosphorylation at Tyr-1333 is important for endocytosis and for interaction with CBL, NCK1 and CRK. Is probably dephosphorylated by PTPRB. As to expression, detected in normal lung, but also in placenta, liver, kidney, heart and brain tissues. Specifically expressed in most of the vascular endothelial cells, and also expressed in peripheral blood monocytes. Isoform 2 is strongly expressed in placenta. Isoform 3 is expressed in corneal epithelial cells (at protein level). Isoform 3 is expressed in vascular smooth muscle cells (VSMC).

It is found in the cell membrane. It localises to the endosome. Its subcellular location is the secreted. The protein resides in the cytoplasm. It catalyses the reaction L-tyrosyl-[protein] + ATP = O-phospho-L-tyrosyl-[protein] + ADP + H(+). With respect to regulation, present in an inactive conformation in the absence of bound ligand. Binding of VEGFA, VEGFB or PGF leads to dimerization and activation by autophosphorylation on tyrosine residues. Functionally, tyrosine-protein kinase that acts as a cell-surface receptor for VEGFA, VEGFB and PGF, and plays an essential role in the development of embryonic vasculature, the regulation of angiogenesis, cell survival, cell migration, macrophage function, chemotaxis, and cancer cell invasion. Acts as a positive regulator of postnatal retinal hyaloid vessel regression. May play an essential role as a negative regulator of embryonic angiogenesis by inhibiting excessive proliferation of endothelial cells. Can promote endothelial cell proliferation, survival and angiogenesis in adulthood. Its function in promoting cell proliferation seems to be cell-type specific. Promotes PGF-mediated proliferation of endothelial cells, proliferation of some types of cancer cells, but does not promote proliferation of normal fibroblasts (in vitro). Has very high affinity for VEGFA and relatively low protein kinase activity; may function as a negative regulator of VEGFA signaling by limiting the amount of free VEGFA and preventing its binding to KDR. Modulates KDR signaling by forming heterodimers with KDR. Ligand binding leads to the activation of several signaling cascades. Activation of PLCG leads to the production of the cellular signaling molecules diacylglycerol and inositol 1,4,5-trisphosphate and the activation of protein kinase C. Mediates phosphorylation of PIK3R1, the regulatory subunit of phosphatidylinositol 3-kinase, leading to activation of phosphatidylinositol kinase and the downstream signaling pathway. Mediates activation of MAPK1/ERK2, MAPK3/ERK1 and the MAP kinase signaling pathway, as well as of the AKT1 signaling pathway. Phosphorylates SRC and YES1, and may also phosphorylate CBL. Promotes phosphorylation of AKT1 at 'Ser-473'. Promotes phosphorylation of PTK2/FAK1. In terms of biological role, phosphorylates PLCG. May function as decoy receptor for VEGFA. Its function is as follows. Has a truncated kinase domain; it increases phosphorylation of SRC at 'Tyr-418' by unknown means and promotes tumor cell invasion. In Homo sapiens (Human), this protein is Vascular endothelial growth factor receptor 1 (FLT1).